The primary structure comprises 1463 residues: Probable ATP-dependent RNA helicase spindle-E (1463 aa).

In terms of domain architecture, Helicase ATP-binding spans 131-296 (LKAIRENPVV…FKIPGPNSLF (166 aa)). Residue 144-151 (GMTGCGKT) coordinates ATP. A DEAH box motif is present at residues 243–246 (DEVH). A Helicase C-terminal domain is found at 348–531 (VCDRFIDEFE…NVVLKTKLLD (184 aa)). In terms of domain architecture, Tudor spans 951-1016 (AFKQRDIVAA…QLRGTPLDMF (66 aa)).

The protein belongs to the DEAD box helicase family. DEAH subfamily.

Its subcellular location is the cytoplasm. It carries out the reaction ATP + H2O = ADP + phosphate + H(+). In terms of biological role, probable ATP-binding RNA helicase which plays a central role during gametogenesis by repressing transposable elements and preventing their mobilization, which is essential for the germline integrity. Acts via the piRNA metabolic process, which mediates the repression of transposable elements during meiosis by forming complexes composed of piRNAs and Piwi proteins and govern the methylation and subsequent repression of transposons. The chain is Probable ATP-dependent RNA helicase spindle-E (spn-E) from Anopheles gambiae (African malaria mosquito).